The chain runs to 460 residues: ATP synthase subunit beta (460 aa).

150–157 (GGAGVGKT) provides a ligand contact to ATP.

Belongs to the ATPase alpha/beta chains family. As to quaternary structure, F-type ATPases have 2 components, CF(1) - the catalytic core - and CF(0) - the membrane proton channel. CF(1) has five subunits: alpha(3), beta(3), gamma(1), delta(1), epsilon(1). CF(0) has three main subunits: a(1), b(2) and c(9-12). The alpha and beta chains form an alternating ring which encloses part of the gamma chain. CF(1) is attached to CF(0) by a central stalk formed by the gamma and epsilon chains, while a peripheral stalk is formed by the delta and b chains.

Its subcellular location is the cell inner membrane. The catalysed reaction is ATP + H2O + 4 H(+)(in) = ADP + phosphate + 5 H(+)(out). Produces ATP from ADP in the presence of a proton gradient across the membrane. The catalytic sites are hosted primarily by the beta subunits. The sequence is that of ATP synthase subunit beta from Photorhabdus laumondii subsp. laumondii (strain DSM 15139 / CIP 105565 / TT01) (Photorhabdus luminescens subsp. laumondii).